Reading from the N-terminus, the 695-residue chain is Protein arginine N-methyltransferase 7 (695 aa).

SAM-dependent MTase PRMT-type domains follow at residues 14–345 and 358–684; these read SVEW…YCVW and RVHP…ITMD. At Arg-32 the chain carries Omega-N-methylarginine. Residues Glu-144 and Glu-153 contribute to the active site.

It belongs to the class I-like SAM-binding methyltransferase superfamily. Protein arginine N-methyltransferase family. PRMT7 subfamily. Homodimer and heterodimer. Interacts with CTCFL, PRMT5 and SNRPD3.

Its subcellular location is the cytoplasm. It localises to the cytosol. It is found in the nucleus. The enzyme catalyses L-arginyl-[protein] + S-adenosyl-L-methionine = N(omega)-methyl-L-arginyl-[protein] + S-adenosyl-L-homocysteine + H(+). In terms of biological role, arginine methyltransferase that can both catalyze the formation of omega-N monomethylarginine (MMA) and symmetrical dimethylarginine (sDMA), with a preference for the formation of MMA. Specifically mediates the symmetrical dimethylation of arginine residues in the small nuclear ribonucleoproteins Sm D1 (SNRPD1) and Sm D3 (SNRPD3); such methylation being required for the assembly and biogenesis of snRNP core particles. Specifically mediates the symmetric dimethylation of histone H4 'Arg-3' to form H4R3me2s. Plays a role in gene imprinting by being recruited by CTCFL at the H19 imprinted control region (ICR) and methylating histone H4 to form H4R3me2s, possibly leading to recruit DNA methyltransferases at these sites. May also play a role in embryonic stem cell (ESC) pluripotency. Also able to mediate the arginine methylation of histone H2A and myelin basic protein (MBP) in vitro; the relevance of such results is however unclear in vivo. In Bos taurus (Bovine), this protein is Protein arginine N-methyltransferase 7 (PRMT7).